A 295-amino-acid polypeptide reads, in one-letter code: Probable dTDP-4,6-dihydroxy-2-methyloxan-3-one 4-ketoreductase (295 aa).

NADH contacts are provided by residues 10-12 (GML), 36-37 (DV), 60-62 (AYT), tyrosine 126, and lysine 130. Residues 11–12 (ML), 36–37 (DV), 60–62 (AYT), tyrosine 126, and lysine 130 contribute to the NADPH site. Residue tyrosine 126 is the Proton donor/acceptor of the active site.

This sequence belongs to the dTDP-4-dehydrorhamnose reductase family. Mg(2+) serves as cofactor.

It participates in antibiotic biosynthesis. Involved in the biosynthesis of one of the two 2,6-deoxysugars, dTDP-L-oleandrose, attached to the macrolactone ring oleandolide to produce the aglycone antibiotic oleandomycin. Probably catalyzes the reduction of dTDP-4-keto-2,6-dideoxy-beta-L-galactose to yield dTDP-L-olivose. The chain is Probable dTDP-4,6-dihydroxy-2-methyloxan-3-one 4-ketoreductase from Streptomyces antibioticus.